Consider the following 200-residue polypeptide: Peptidyl-tRNA hydrolase (200 aa).

Residue Tyr15 participates in tRNA binding. The Proton acceptor role is filled by His20. Residues Tyr66, Asn68, and Asn114 each contribute to the tRNA site.

It belongs to the PTH family. In terms of assembly, monomer.

It localises to the cytoplasm. The catalysed reaction is an N-acyl-L-alpha-aminoacyl-tRNA + H2O = an N-acyl-L-amino acid + a tRNA + H(+). Functionally, hydrolyzes ribosome-free peptidyl-tRNAs (with 1 or more amino acids incorporated), which drop off the ribosome during protein synthesis, or as a result of ribosome stalling. Its function is as follows. Catalyzes the release of premature peptidyl moieties from peptidyl-tRNA molecules trapped in stalled 50S ribosomal subunits, and thus maintains levels of free tRNAs and 50S ribosomes. The protein is Peptidyl-tRNA hydrolase of Paraburkholderia phytofirmans (strain DSM 17436 / LMG 22146 / PsJN) (Burkholderia phytofirmans).